The following is a 137-amino-acid chain: uncharacterized protein (137 aa).

Positions 67-87 are disordered; it reads KSERQHQRVHHELPHDKPRQS. Residues 70–85 show a composition bias toward basic and acidic residues; sequence RQHQRVHHELPHDKPR.

This is an uncharacterized protein from Human cytomegalovirus (strain AD169) (HHV-5).